A 461-amino-acid chain; its full sequence is Argininosuccinate lyase (461 aa).

It belongs to the lyase 1 family. Argininosuccinate lyase subfamily.

Its subcellular location is the cytoplasm. The catalysed reaction is 2-(N(omega)-L-arginino)succinate = fumarate + L-arginine. Its pathway is amino-acid biosynthesis; L-arginine biosynthesis; L-arginine from L-ornithine and carbamoyl phosphate: step 3/3. The sequence is that of Argininosuccinate lyase from Shewanella piezotolerans (strain WP3 / JCM 13877).